A 550-amino-acid polypeptide reads, in one-letter code: Hydroxylamine reductase (550 aa).

The [2Fe-2S] cluster site is built by Cys3, Cys6, Cys18, and Cys25. The hybrid [4Fe-2O-2S] cluster site is built by His249, Glu273, Cys317, Cys405, Cys433, Cys458, Glu492, and Lys494. Cys405 is modified (cysteine persulfide).

This sequence belongs to the HCP family. Requires [2Fe-2S] cluster as cofactor. Hybrid [4Fe-2O-2S] cluster is required as a cofactor.

The protein localises to the cytoplasm. It carries out the reaction A + NH4(+) + H2O = hydroxylamine + AH2 + H(+). Functionally, catalyzes the reduction of hydroxylamine to form NH(3) and H(2)O. This chain is Hydroxylamine reductase, found in Salmonella enteritidis PT4 (strain P125109).